The primary structure comprises 438 residues: MVKNVTVIGGGLAGSEAAWQLAKRGIEVELYEMRPKKTTPAHETANFAELVCTNSMRSNQLSNAVGLLKEEMRQLDSLIMKAADETAVPAGGALAVDRDKFSSVVTQTLKDLPNVHVHEEEITKIPKDGITIIATGPLTSDTLAEQIKDFCGTDSLHFFDAAAPIVAASSIDRDIVYKKSRYDKGEAAYLNCPMTKEEFFNFYKNLVSAETATLHGFEDKNVFEGCMPIEVMAKRGEKTMLFGPLKPVGLEDPKTGKTPYAVVQLRQDNAASTMYNIVGFQTHLKYGEQKRVFSMIPGLENAKFVRYGKMHRNTYIASPEVLNANYEARKQAGLFFAGQMTGVEGYVESAGSGLIAGINAARETVGEETLVFPKSTALGSMAHYITTTSAKHFQPMNASYALLPKLDYKVRNKQERHLEISKRALKDLETFKEEKKLD.

9–14 (GGGLAG) lines the FAD pocket.

Belongs to the MnmG family. TrmFO subfamily. It depends on FAD as a cofactor.

It localises to the cytoplasm. The catalysed reaction is uridine(54) in tRNA + (6R)-5,10-methylene-5,6,7,8-tetrahydrofolate + NADH + H(+) = 5-methyluridine(54) in tRNA + (6S)-5,6,7,8-tetrahydrofolate + NAD(+). It catalyses the reaction uridine(54) in tRNA + (6R)-5,10-methylene-5,6,7,8-tetrahydrofolate + NADPH + H(+) = 5-methyluridine(54) in tRNA + (6S)-5,6,7,8-tetrahydrofolate + NADP(+). Functionally, catalyzes the folate-dependent formation of 5-methyl-uridine at position 54 (M-5-U54) in all tRNAs. This is Methylenetetrahydrofolate--tRNA-(uracil-5-)-methyltransferase TrmFO from Lactobacillus gasseri (strain ATCC 33323 / DSM 20243 / BCRC 14619 / CIP 102991 / JCM 1131 / KCTC 3163 / NCIMB 11718 / NCTC 13722 / AM63).